Here is a 535-residue protein sequence, read N- to C-terminus: Keratin, type II cytoskeletal 79 (535 aa).

Residues 1 to 12 (MRSSVSRQTYST) are compositionally biased toward polar residues. The tract at residues 1–52 (MRSSVSRQTYSTKGGFSSNSASGGSGSQARTSFSSVTVSRSSGSGGGAHCGP) is disordered. A head region spans residues 1-141 (MRSSVSRQTY…DPEIQRVRTQ (141 aa)). Residues 32 to 42 (SFSSVTVSRSS) show a composition bias toward low complexity. Positions 43–52 (GSGGGAHCGP) are enriched in gly residues. Positions 142–177 (EREQIKTLNNKFASFIDKVRFLEQQNKVLETKWALL) are coil 1A. An IF rod domain is found at 142-457 (EREQIKTLNN…KLLESEESRM (316 aa)). The interval 178-198 (QEQGQNLGVTRNNLEPLFEAY) is linker 1. Residues 199 to 290 (LGSMRSTLDR…QLYEMELSQV (92 aa)) form a coil 1B region. The segment at 291 to 314 (QTHVSNTNVVLSMDNNRNLDLDSI) is linker 12. The segment at 315 to 453 (IAEVKAQYEL…ATYRKLLESE (139 aa)) is coil 2. The segment at 454-535 (ESRMSGECPS…TTVKTSSQRY (82 aa)) is tail.

It belongs to the intermediate filament family. In terms of assembly, heterotetramer of two type I and two type II keratins. In terms of tissue distribution, expressed in skeletal muscle, skin and scalp, but not in any other tissues or organs examined.

This chain is Keratin, type II cytoskeletal 79 (KRT79), found in Homo sapiens (Human).